A 464-amino-acid chain; its full sequence is Fumarate hydratase class II (464 aa).

Substrate is bound by residues 96–98, 127–130, 137–139, and threonine 185; these read SGT, HPND, and SSN. The Proton donor/acceptor role is filled by histidine 186. Serine 316 is an active-site residue. Residues serine 317 and 322-324 contribute to the substrate site; that span reads KVN.

Belongs to the class-II fumarase/aspartase family. Fumarase subfamily. As to quaternary structure, homotetramer.

The protein localises to the cytoplasm. The catalysed reaction is (S)-malate = fumarate + H2O. The protein operates within carbohydrate metabolism; tricarboxylic acid cycle; (S)-malate from fumarate: step 1/1. Functionally, involved in the TCA cycle. Catalyzes the stereospecific interconversion of fumarate to L-malate. This Pseudomonas syringae pv. tomato (strain ATCC BAA-871 / DC3000) protein is Fumarate hydratase class II.